The following is a 1308-amino-acid chain: Chromosome partition protein Smc (1308 aa).

34–41 is a binding site for ATP; sequence PNGCGKSN. A disordered region spans residues 115–181; the sequence is AAREASMEEV…VAEGQPSDAQ (67 aa). The span at 137–169 shows a compositional bias: low complexity; that stretch reads TEAEATEQQAAPSEGAAPTTEATAPSTENEAAP. The stretch at 278–600 forms a coiled coil; it reads ITKYKTKKRL…DTLRAEYATL (323 aa). Positions 637 to 757 constitute an SMC hinge domain; it reads AGVLADFLEV…VPDPAIGREL (121 aa). Coiled-coil stretches lie at residues 791 to 1046 and 1110 to 1148; these read SLKR…ELHA and MALE…EIDQ.

The protein belongs to the SMC family. Homodimer.

The protein localises to the cytoplasm. Functionally, required for chromosome condensation and partitioning. This chain is Chromosome partition protein Smc, found in Koribacter versatilis (strain Ellin345).